A 521-amino-acid polypeptide reads, in one-letter code: Calcium-dependent protein kinase 33 (521 aa).

Residue glycine 2 is the site of N-myristoyl glycine attachment. Residues 15–56 (PQQNGERSVEIENRRRSTHQDPSKISTGTNQPPPWRNPAKHS) are disordered. Over residues 21–36 (RSVEIENRRRSTHQDP) the composition is skewed to basic and acidic residues. The region spanning 73–331 (YTLSKELGRG…AAEVLKHPWL (259 aa)) is the Protein kinase domain. ATP contacts are provided by residues 79-87 (LGRGQFGVT) and lysine 102. Catalysis depends on aspartate 197, which acts as the Proton acceptor. A Phosphoserine modification is found at serine 237. Positions 337-367 (ASDKPIDSAVLSRMKQFRAMNKLKKLALKVI) are autoinhibitory domain. 4 consecutive EF-hand domains span residues 374–409 (EEIQ…LGSR), 410–445 (LTEA…RHRL), 446–481 (ESNE…YGMG), and 482–516 (DDAT…GNPQ). 20 residues coordinate Ca(2+): aspartate 387, aspartate 389, serine 391, threonine 393, glutamate 398, aspartate 423, aspartate 425, asparagine 427, serine 429, glutamate 434, aspartate 459, aspartate 461, serine 463, tyrosine 465, glutamate 470, aspartate 494, aspartate 496, aspartate 498, arginine 500, and glutamate 505.

Belongs to the protein kinase superfamily. Ser/Thr protein kinase family. CDPK subfamily. In terms of assembly, interacts with THI1. Interacts with FD and FDP. Autophosphorylated. Expressed in primary roots, leaves, inflorescences, siliques and guard cells. Expressed in the shoot apical meristem.

Its subcellular location is the cell membrane. The protein resides in the nucleus. It localises to the cytoplasm. The catalysed reaction is L-seryl-[protein] + ATP = O-phospho-L-seryl-[protein] + ADP + H(+). It carries out the reaction L-threonyl-[protein] + ATP = O-phospho-L-threonyl-[protein] + ADP + H(+). With respect to regulation, activated by calcium. Autophosphorylation may play an important role in the regulation of the kinase activity. Repressed by THI1 through a negative regulation of the autophosphorylation activity in the presence of Ca(2+). Ca(2+)-dependent protein kinase. Negative regulator of stomatal closure and slow anion currents. Unable to phosphorylate THI1 in vitro, but the kinase activity is essential for the stomatal closure regulation. Phosphorylates FD. May play a role in signal transduction pathways that involve calcium as a second messenger. The polypeptide is Calcium-dependent protein kinase 33 (Arabidopsis thaliana (Mouse-ear cress)).